We begin with the raw amino-acid sequence, 908 residues long: Hyphal wall protein 2 (908 aa).

The N-terminal stretch at 1 to 20 is a signal peptide; the sequence is MRFATTQLATLACFILTAEA. 3 stretches are compositionally biased toward low complexity: residues 110–187, 266–324, and 332–405; these read PKTA…TTSK, ESTT…TMKH, and HATT…KSST. 2 disordered regions span residues 110–221 and 263–477; these read PKTA…PSKT and TETE…IPKY. The span at 406–416 shows a compositional bias: polar residues; sequence PASTLEYSTSI. Residues 422–477 are compositionally biased toward low complexity; sequence TTSNSLSTKSTTLTTISRSSTSGSSVPNTTRESSTSTTTPNSSSSESKVSSAIPKY. Residues Asn-449, Asn-462, and Asn-519 are each glycosylated (N-linked (GlcNAc...) asparagine). The span at 539–608 shows a compositional bias: low complexity; the sequence is GTTVRSSTSE…TSTTTPESSP (70 aa). The disordered stretch occupies residues 539-700; sequence GTTVRSSTSE…TSASETSSGS (162 aa). Polar residues predominate over residues 624–638; that stretch reads TMESSASTTKNSSIQ. N-linked (GlcNAc...) asparagine glycosylation occurs at Asn-634. Composition is skewed to low complexity over residues 639–655 and 662–677; these read STSE…ESSV and SSVP…VVTT. An N-linked (GlcNAc...) asparagine glycan is attached at Asn-684. The segment covering 685-700 has biased composition (low complexity); sequence TTLEHSTSASETSSGS. The N-linked (GlcNAc...) asparagine glycan is linked to Asn-764. The segment at 821-844 is disordered; the sequence is VSTDVKPTTSSQGTKSTPVDTDSK. Residue Gly-887 is the site of GPI-anchor amidated glycine attachment. Positions 888 to 908 are cleaved as a propeptide — removed in mature form; the sequence is TGNNMKLSFGVVIAGVAAFAI.

The GPI-anchor is attached to the protein in the endoplasmic reticulum and serves to target the protein to the cell surface. There, the glucosamine-inositol phospholipid moiety is cleaved off and the GPI-modified mannoprotein is covalently attached via its lipidless GPI glycan remnant to the 1,6-beta-glucan of the outer cell wall layer.

It localises to the secreted. The protein resides in the cell wall. The protein localises to the membrane. Functionally, GPI-anchored cell wall protein required for mating efficiency, biofilm formation, adhesion, filamentous growth, and oxidative stress tolerance. Involved in normal disseminated infection in a mouse systemic candidiasis model. This Candida albicans (strain SC5314 / ATCC MYA-2876) (Yeast) protein is Hyphal wall protein 2 (HWP2).